Here is a 513-residue protein sequence, read N- to C-terminus: OBERON-like protein (513 aa).

The segment at 166-235 (NGFCNLCMCV…VFRCQACSXT (70 aa)) adopts a PHD-type zinc-finger fold. Residues 372–469 (RELADKAREA…LYEKIKLQES (98 aa)) are a coiled coil. Positions 493–513 (YNGPPKADSQSNDCHPFRTNP) are disordered. A compositionally biased stretch (polar residues) spans 500–513 (DSQSNDCHPFRTNP).

In terms of assembly, self-interacts and probably forms heteromers. Binds to VPg of pea seed borne mosaic virus (PSbMV), turnip mosaic virus (TuMV) and lettuce mosaic virus (LMV), but not with VPg of tobacco etch virus (TEV), cowpea mosaic virus (CPMV), tomato black ring virus (TBRV) and grapevine fan leaf virus (GFLV).

The protein localises to the nucleus. In terms of biological role, required for the maintenance and/or establishment of both the shoot and root meristems, probably by controlling the expression of the meristem genes and of genes required for auxin responses. Involved in the development of the basal pole and in auxin-mediated root and vascular development in the embryo. Confers sensitivity to turnip mosaic virus (TuMV) probably by promoting viral movement and multiplication via interaction with TuMV VPg. The chain is OBERON-like protein (PVIP) from Pisum sativum (Garden pea).